The following is a 376-amino-acid chain: Sterol 24-C-methyltransferase (376 aa).

It belongs to the class I-like SAM-binding methyltransferase superfamily. Erg6/SMT family.

The catalysed reaction is zymosterol + S-adenosyl-L-methionine = fecosterol + S-adenosyl-L-homocysteine + H(+). The protein operates within steroid metabolism; ergosterol biosynthesis; ergosterol from zymosterol: step 1/5. Substrate analogs 25-azalanosterol and 24(R,S),25-epiminolanosterol act as inhibitors. Functionally, sterol 24-C-methyltransferase; part of the third module of ergosterol biosynthesis pathway that includes the late steps of the pathway. ERG6 catalyzes the methyl transfer from S-adenosyl-methionine to the C-24 of zymosterol to form fecosterol. The third module or late pathway involves the ergosterol synthesis itself through consecutive reactions that mainly occur in the endoplasmic reticulum (ER) membrane. Firstly, the squalene synthase ERG9 catalyzes the condensation of 2 farnesyl pyrophosphate moieties to form squalene, which is the precursor of all steroids. Squalene synthase is crucial for balancing the incorporation of farnesyl diphosphate (FPP) into sterol and nonsterol isoprene synthesis. Secondly, the squalene epoxidase ERG1 catalyzes the stereospecific oxidation of squalene to (S)-2,3-epoxysqualene, which is considered to be a rate-limiting enzyme in steroid biosynthesis. Then, the lanosterol synthase ERG7 catalyzes the cyclization of (S)-2,3 oxidosqualene to lanosterol, a reaction that forms the sterol core. In the next steps, lanosterol is transformed to zymosterol through a complex process involving various demethylation, reduction and desaturation reactions. The lanosterol 14-alpha-demethylase ERG11 (also known as CYP51) catalyzes C14-demethylation of lanosterol to produce 4,4'-dimethyl cholesta-8,14,24-triene-3-beta-ol, which is critical for ergosterol biosynthesis. The C-14 reductase ERG24 reduces the C14=C15 double bond of 4,4-dimethyl-cholesta-8,14,24-trienol to produce 4,4-dimethyl-cholesta-8,24-dienol. 4,4-dimethyl-cholesta-8,24-dienol is substrate of the C-4 demethylation complex ERG25-ERG26-ERG27 in which ERG25 catalyzes the three-step monooxygenation required for the demethylation of 4,4-dimethyl and 4alpha-methylsterols, ERG26 catalyzes the oxidative decarboxylation that results in a reduction of the 3-beta-hydroxy group at the C-3 carbon to an oxo group, and ERG27 is responsible for the reduction of the keto group on the C-3. ERG28 has a role as a scaffold to help anchor ERG25, ERG26 and ERG27 to the endoplasmic reticulum and ERG29 regulates the activity of the iron-containing C4-methylsterol oxidase ERG25. Then, the sterol 24-C-methyltransferase ERG6 catalyzes the methyl transfer from S-adenosyl-methionine to the C-24 of zymosterol to form fecosterol. The C-8 sterol isomerase ERG2 catalyzes the reaction which results in unsaturation at C-7 in the B ring of sterols and thus converts fecosterol to episterol. The sterol-C5-desaturase ERG3 then catalyzes the introduction of a C-5 double bond in the B ring to produce 5-dehydroepisterol. The C-22 sterol desaturase ERG5 further converts 5-dehydroepisterol into ergosta-5,7,22,24(28)-tetraen-3beta-ol by forming the C-22(23) double bond in the sterol side chain. Finally, ergosta-5,7,22,24(28)-tetraen-3beta-ol is substrate of the C-24(28) sterol reductase ERG4 to produce ergosterol. This Candida albicans (strain SC5314 / ATCC MYA-2876) (Yeast) protein is Sterol 24-C-methyltransferase.